The chain runs to 27 residues: Cysteine-rich venom protein tropirin (27 aa).

The protein belongs to the CRISP family. Contains 8 disulfide bonds. As to expression, expressed by the venom gland.

The protein resides in the secreted. In terms of biological role, blocks contraction of smooth muscle elicited by high potassium-induced depolarization, but does not block caffeine-stimulated contraction. May target voltage-gated calcium channels on smooth muscle. The chain is Cysteine-rich venom protein tropirin from Tropidechis carinatus (Australian rough-scaled snake).